A 738-amino-acid chain; its full sequence is Integrin beta-2-like protein (738 aa).

A signal peptide spans 1–22; the sequence is MLGQCTLLPVLAGLLSLESALS. At 23–671 the chain is on the extracellular side; that stretch reads QLCTKDNVST…LVCAEISNTT (649 aa). The region spanning 24-74 is the PSI domain; it reads LCTKDNVSTCQDCIRSGPSCAWCQKLNFTGRGEPDSVRCDTPEQLLLKGCT. Intrachain disulfides connect cysteine 25–cysteine 419, cysteine 33–cysteine 43, cysteine 36–cysteine 73, cysteine 46–cysteine 62, cysteine 218–cysteine 258, cysteine 358–cysteine 372, cysteine 421–cysteine 439, cysteine 431–cysteine 442, cysteine 444–cysteine 453, cysteine 455–cysteine 486, cysteine 469–cysteine 484, cysteine 478–cysteine 489, cysteine 491–cysteine 506, cysteine 508–cysteine 531, cysteine 513–cysteine 529, cysteine 521–cysteine 534, cysteine 536–cysteine 545, cysteine 547–cysteine 570, cysteine 554–cysteine 568, cysteine 562–cysteine 573, cysteine 575–cysteine 584, cysteine 594–cysteine 603, and cysteine 600–cysteine 664. The N-linked (GlcNAc...) asparagine glycan is linked to asparagine 29. Asparagine 50, asparagine 102, asparagine 173, asparagine 226, asparagine 252, asparagine 342, asparagine 360, and asparagine 386 each carry an N-linked (GlcNAc...) asparagine glycan. In terms of domain architecture, VWFA spans 126-329; the sequence is SVDLYFLMGL…DSSNVAQLIR (204 aa). 4 consecutive I-EGF domains span residues 421 to 454, 455 to 507, 508 to 546, and 547 to 585; these read CQEQ…KNCE, CQTQ…QYCE, CNNV…SACQ, and CRMS…PLCE. N-linked (GlcNAc...) asparagine glycosylation is present at asparagine 473. N-linked (GlcNAc...) asparagine glycans are attached at residues asparagine 627 and asparagine 669. The chain crosses the membrane as a helical span at residues 672–692; that stretch reads ILLGVIVGVLLAVIFLLVYCM. Residues 693-738 are Cytoplasmic-facing; that stretch reads VYLKGTQKAAKLPRKGGAQSTLAQQPHFQEPHHVEPVWNQERQGTQ. The disordered stretch occupies residues 709–738; that stretch reads GAQSTLAQQPHFQEPHHVEPVWNQERQGTQ. Residues 710–719 show a composition bias toward polar residues; it reads AQSTLAQQPH.

The protein belongs to the integrin beta chain family. In terms of assembly, monomer and homodimer. Unlike integrin beta chains, no alpha chain partner has yet been found. Post-translationally, N-glycosylated. As to expression, expressed predominantly in maturing and mature neutrophils.

The protein resides in the cell membrane. Its function is as follows. During inflammatory stimulation, plays a role in retaining Cxcl13-expressing cells at the site of the inflammatory response. The chain is Integrin beta-2-like protein from Mus musculus (Mouse).